Here is a 229-residue protein sequence, read N- to C-terminus: Uridylate cyclase (229 aa).

The Guanylate cyclase domain maps to 47-178 (TVLYADLDGS…RAANYAAKLT (132 aa)). A ribonucleoside 5'-triphosphate is bound at residue tyrosine 50. Mn(2+) is bound by residues aspartate 52 and aspartate 96. Position 97 (arginine 97) interacts with a ribonucleoside 5'-triphosphate.

The protein belongs to the adenylyl cyclase class-4/guanylyl cyclase family. Pyrimidine cyclase subfamily. In terms of assembly, homodimer. It depends on Mn(2+) as a cofactor.

It localises to the cytoplasm. The enzyme catalyses UTP = 3',5'-cyclic UMP + diphosphate. Pycsar (pyrimidine cyclase system for antiphage resistance) provides immunity against bacteriophage. The pyrimidine cyclase (PycC) synthesizes cyclic nucleotides in response to infection; these serve as specific second messenger signals. The signals activate the adjacent effector, leading to bacterial cell death and abortive phage infection. A clade B Pycsar system. Its function is as follows. The pyrimidine cyclase gene of a two-gene Pycsar system, generates cyclic UMP (cUMP) from UTP, has little to no activity on ATP, CTP or GTP. Expression of this and adjacent effector BcPycTIR (AC A0A0J5WTU0) probably confers resistance to bacteriophage. The genes are probably only expressed in response to bacteriophage infection. The sequence is that of Uridylate cyclase from Burkholderia cepacia (Pseudomonas cepacia).